The primary structure comprises 406 residues: Peptidase T (406 aa).

Residue His82 coordinates Zn(2+). Residue Asp84 is part of the active site. Asp142 is a binding site for Zn(2+). The Proton acceptor role is filled by Glu176. Residues Glu177, Asp199, and His381 each coordinate Zn(2+).

It belongs to the peptidase M20B family. The cofactor is Zn(2+).

It localises to the cytoplasm. The catalysed reaction is Release of the N-terminal residue from a tripeptide.. Functionally, cleaves the N-terminal amino acid of tripeptides. In Streptococcus agalactiae serotype Ia (strain ATCC 27591 / A909 / CDC SS700), this protein is Peptidase T.